The following is a 483-amino-acid chain: Glutamate--tRNA ligase (483 aa).

The 'HIGH' region signature appears at 14–24 (PSPTGDPHVGT). The short motif at 253-257 (KISKR) is the 'KMSKS' region element. An ATP-binding site is contributed by K256.

This sequence belongs to the class-I aminoacyl-tRNA synthetase family. Glutamate--tRNA ligase type 1 subfamily. As to quaternary structure, monomer.

The protein localises to the cytoplasm. It catalyses the reaction tRNA(Glu) + L-glutamate + ATP = L-glutamyl-tRNA(Glu) + AMP + diphosphate. Catalyzes the attachment of glutamate to tRNA(Glu) in a two-step reaction: glutamate is first activated by ATP to form Glu-AMP and then transferred to the acceptor end of tRNA(Glu). This chain is Glutamate--tRNA ligase, found in Deinococcus radiodurans (strain ATCC 13939 / DSM 20539 / JCM 16871 / CCUG 27074 / LMG 4051 / NBRC 15346 / NCIMB 9279 / VKM B-1422 / R1).